The following is a 189-amino-acid chain: 5-hmdU DNA kinase (189 aa).

The protein belongs to the thymidylate kinase family. 5-hmdU DNA kinase subfamily.

It catalyses the reaction 5-hydroxymethyl-dUMP in DNA + ATP = 5-phosphomethyl-dUMP in DNA + ADP + H(+). Phosphorylates 5-hydroxymethyluracil (5hmdU) into 5-phosphomethyl-2'-deoxyuridine (5- PmdU) on DNA as a step in the pathway leading to thymidine hypermodifications in the viral genome. The phosphate is added internally to the DNA polymer. As a final result of the pathway of hypermodification, 5-AcNmdU substitutes for a subset of thymidines in the viral DNA. These modifications probably prevent degradation of viral genome by the host restriction-modification antiviral defense system. In Pseudomonas phage PaMx11, this protein is 5-hmdU DNA kinase.